A 526-amino-acid chain; its full sequence is Peptide chain release factor 3 (526 aa).

The tr-type G domain occupies 9 to 277 (ERRRTFAIIS…AFAEYAPPPQ (269 aa)). GTP contacts are provided by residues 18–25 (SHPDAGKT), 86–90 (DTPGH), and 140–143 (NKLD).

Belongs to the TRAFAC class translation factor GTPase superfamily. Classic translation factor GTPase family. PrfC subfamily.

The protein localises to the cytoplasm. In terms of biological role, increases the formation of ribosomal termination complexes and stimulates activities of RF-1 and RF-2. It binds guanine nucleotides and has strong preference for UGA stop codons. It may interact directly with the ribosome. The stimulation of RF-1 and RF-2 is significantly reduced by GTP and GDP, but not by GMP. The protein is Peptide chain release factor 3 of Methylococcus capsulatus (strain ATCC 33009 / NCIMB 11132 / Bath).